A 412-amino-acid chain; its full sequence is Protein MT3510 (412 aa).

Lysine 227 carries the post-translational modification N6-(pyridoxal phosphate)lysine.

This sequence belongs to the DegT/DnrJ/EryC1 family.

This chain is Protein MT3510, found in Mycobacterium tuberculosis (strain CDC 1551 / Oshkosh).